The following is a 687-amino-acid chain: Phage-like element PBSX protein XkdV (687 aa).

This sequence to B.subtilis YqcC.

This Bacillus subtilis (strain 168) protein is Phage-like element PBSX protein XkdV (xkdV).